The following is a 302-amino-acid chain: Nucleotide-binding protein RHOS4_02640 (302 aa).

15–22 (GPSGAGRT) serves as a coordination point for ATP. 62 to 65 (DVRN) provides a ligand contact to GTP.

This sequence belongs to the RapZ-like family.

In terms of biological role, displays ATPase and GTPase activities. The protein is Nucleotide-binding protein RHOS4_02640 of Cereibacter sphaeroides (strain ATCC 17023 / DSM 158 / JCM 6121 / CCUG 31486 / LMG 2827 / NBRC 12203 / NCIMB 8253 / ATH 2.4.1.) (Rhodobacter sphaeroides).